A 69-amino-acid polypeptide reads, in one-letter code: UPF0337 protein ECA0631 (69 aa).

It belongs to the UPF0337 (CsbD) family.

This is UPF0337 protein ECA0631 from Pectobacterium atrosepticum (strain SCRI 1043 / ATCC BAA-672) (Erwinia carotovora subsp. atroseptica).